We begin with the raw amino-acid sequence, 653 residues long: Fidgetin-like protein 2 (653 aa).

Disordered stretches follow at residues 1 to 36, 86 to 129, and 216 to 240; these read MHWT…ELPP, ASFL…SGAL, and YGAL…APTP. The segment covering 10 to 27 has biased composition (polar residues); it reads PLNQWPEQHLDVSSTTPS. Residues 97-107 are compositionally biased toward pro residues; that stretch reads EPWPGPEPPYP. The span at 119–129 shows a compositional bias: gly residues; sequence KSGGGGGSGAL. Residues 219–240 are compositionally biased toward pro residues; that stretch reads LPPPPGPPPAPYLTPGLPAPTP. ATP contacts are provided by residues A395 and 435–440; that span reads GAGKAL.

This sequence belongs to the AAA ATPase family. It depends on Mg(2+) as a cofactor.

It localises to the cytoplasm. The protein localises to the cell cortex. It catalyses the reaction ATP + H2O = ADP + phosphate + H(+). In terms of biological role, microtubule-severing enzyme that negatively regulates cell migration and wound healing. In migrating cells, targets dynamic microtubules (MTs) at the leading edge and severs them, thereby suppressing motility. Microtubule severing releases ARHGEF2 which activates RHOA, which in turn regulates focal ahesion turnover via focal adhesion kinase, as opposed to F-actin polymerization, to suppress cell motility. Negative regulator of axon regeneration that suppresses axonal growth by selectively severing dynamic MTs in the distal axon shaft and growth cone. Contributes to proper cell branching during endothelial and neuronal development. In Homo sapiens (Human), this protein is Fidgetin-like protein 2.